A 280-amino-acid chain; its full sequence is Large ribosomal subunit protein uL2 (280 aa).

Disordered regions lie at residues 1–25 (MGIR…AEVT) and 230–280 (HPHG…SGRG). A compositionally biased stretch (basic residues) spans 257–280 (KTRKRRKPSSKFIIRRRKTASGRG).

Belongs to the universal ribosomal protein uL2 family. Part of the 50S ribosomal subunit. Forms a bridge to the 30S subunit in the 70S ribosome.

Functionally, one of the primary rRNA binding proteins. Required for association of the 30S and 50S subunits to form the 70S ribosome, for tRNA binding and peptide bond formation. It has been suggested to have peptidyltransferase activity; this is somewhat controversial. Makes several contacts with the 16S rRNA in the 70S ribosome. The protein is Large ribosomal subunit protein uL2 of Gloeobacter violaceus (strain ATCC 29082 / PCC 7421).